The sequence spans 132 residues: Small ribosomal subunit protein uS8 (132 aa).

It belongs to the universal ribosomal protein uS8 family. As to quaternary structure, part of the 30S ribosomal subunit. Contacts proteins S5 and S12.

In terms of biological role, one of the primary rRNA binding proteins, it binds directly to 16S rRNA central domain where it helps coordinate assembly of the platform of the 30S subunit. This is Small ribosomal subunit protein uS8 from Borrelia turicatae (strain 91E135).